Here is a 506-residue protein sequence, read N- to C-terminus: Cobyric acid synthase (506 aa).

The GATase cobBQ-type domain occupies 251-448; sequence DIDIAVVQVP…LHGLFDSDAF (198 aa). Cys332 serves as the catalytic Nucleophile. The active site involves His440.

The protein belongs to the CobB/CobQ family. CobQ subfamily.

It functions in the pathway cofactor biosynthesis; adenosylcobalamin biosynthesis. Functionally, catalyzes amidations at positions B, D, E, and G on adenosylcobyrinic A,C-diamide. NH(2) groups are provided by glutamine, and one molecule of ATP is hydrogenolyzed for each amidation. In Citrobacter koseri (strain ATCC BAA-895 / CDC 4225-83 / SGSC4696), this protein is Cobyric acid synthase.